A 187-amino-acid chain; its full sequence is Potassium-transporting ATPase KdpC subunit (187 aa).

A helical membrane pass occupies residues 10 to 30; it reads LVAATMLICVAGYSAAVWAVG.

The protein belongs to the KdpC family. In terms of assembly, the system is composed of three essential subunits: KdpA, KdpB and KdpC.

It is found in the cell inner membrane. In terms of biological role, part of the high-affinity ATP-driven potassium transport (or Kdp) system, which catalyzes the hydrolysis of ATP coupled with the electrogenic transport of potassium into the cytoplasm. This subunit acts as a catalytic chaperone that increases the ATP-binding affinity of the ATP-hydrolyzing subunit KdpB by the formation of a transient KdpB/KdpC/ATP ternary complex. In Parvibaculum lavamentivorans (strain DS-1 / DSM 13023 / NCIMB 13966), this protein is Potassium-transporting ATPase KdpC subunit.